A 105-amino-acid polypeptide reads, in one-letter code: uncharacterized protein (105 aa).

The signal sequence occupies residues Met-1–Gly-19.

This is an uncharacterized protein from Magallana gigas (Pacific oyster).